The sequence spans 209 residues: Pyridoxine/pyridoxamine 5'-phosphate oxidase (209 aa).

Substrate is bound by residues 7-10 (REDY) and Lys-64. Residues 59–64 (RIVLLK), 74–75 (FT), Arg-80, and Lys-81 contribute to the FMN site. Substrate contacts are provided by Tyr-121, Arg-125, and Ser-129. FMN contacts are provided by residues 138–139 (QS) and Trp-182. Residue 188–190 (RLH) participates in substrate binding. Arg-192 serves as a coordination point for FMN.

This sequence belongs to the pyridoxamine 5'-phosphate oxidase family. Homodimer. Requires FMN as cofactor.

It carries out the reaction pyridoxamine 5'-phosphate + O2 + H2O = pyridoxal 5'-phosphate + H2O2 + NH4(+). The catalysed reaction is pyridoxine 5'-phosphate + O2 = pyridoxal 5'-phosphate + H2O2. Its pathway is cofactor metabolism; pyridoxal 5'-phosphate salvage; pyridoxal 5'-phosphate from pyridoxamine 5'-phosphate: step 1/1. It functions in the pathway cofactor metabolism; pyridoxal 5'-phosphate salvage; pyridoxal 5'-phosphate from pyridoxine 5'-phosphate: step 1/1. Catalyzes the oxidation of either pyridoxine 5'-phosphate (PNP) or pyridoxamine 5'-phosphate (PMP) into pyridoxal 5'-phosphate (PLP). This chain is Pyridoxine/pyridoxamine 5'-phosphate oxidase, found in Actinobacillus pleuropneumoniae serotype 5b (strain L20).